Reading from the N-terminus, the 347-residue chain is N-acetyl-gamma-glutamyl-phosphate reductase (347 aa).

Residue Cys152 is part of the active site.

This sequence belongs to the NAGSA dehydrogenase family. Type 1 subfamily.

The protein resides in the cytoplasm. It catalyses the reaction N-acetyl-L-glutamate 5-semialdehyde + phosphate + NADP(+) = N-acetyl-L-glutamyl 5-phosphate + NADPH + H(+). It participates in amino-acid biosynthesis; L-arginine biosynthesis; N(2)-acetyl-L-ornithine from L-glutamate: step 3/4. Functionally, catalyzes the NADPH-dependent reduction of N-acetyl-5-glutamyl phosphate to yield N-acetyl-L-glutamate 5-semialdehyde. The sequence is that of N-acetyl-gamma-glutamyl-phosphate reductase from Ehrlichia ruminantium (strain Gardel).